The primary structure comprises 71 residues: Translation initiation factor IF-1 (71 aa).

The region spanning 1-71 (MAKQSAIEQD…LSKARITYRY (71 aa)) is the S1-like domain.

It belongs to the IF-1 family. Component of the 30S ribosomal translation pre-initiation complex which assembles on the 30S ribosome in the order IF-2 and IF-3, IF-1 and N-formylmethionyl-tRNA(fMet); mRNA recruitment can occur at any time during PIC assembly.

The protein localises to the cytoplasm. Its function is as follows. One of the essential components for the initiation of protein synthesis. Stabilizes the binding of IF-2 and IF-3 on the 30S subunit to which N-formylmethionyl-tRNA(fMet) subsequently binds. Helps modulate mRNA selection, yielding the 30S pre-initiation complex (PIC). Upon addition of the 50S ribosomal subunit IF-1, IF-2 and IF-3 are released leaving the mature 70S translation initiation complex. This chain is Translation initiation factor IF-1, found in Flavobacterium johnsoniae (strain ATCC 17061 / DSM 2064 / JCM 8514 / BCRC 14874 / CCUG 350202 / NBRC 14942 / NCIMB 11054 / UW101) (Cytophaga johnsonae).